Reading from the N-terminus, the 764-residue chain is 5-methyltetrahydropteroyltriglutamate--homocysteine methyltransferase (764 aa).

Residues 16-19 (RELK) and Lys117 each bind 5-methyltetrahydropteroyltri-L-glutamate. L-homocysteine is bound by residues 442-444 (IGS) and Glu495. L-methionine-binding positions include 442–444 (IGS) and Glu495. 5-methyltetrahydropteroyltri-L-glutamate is bound by residues 526 to 527 (RC) and Trp572. Asp610 serves as a coordination point for L-homocysteine. Residue Asp610 participates in L-methionine binding. Residue Glu616 coordinates 5-methyltetrahydropteroyltri-L-glutamate. Residues His652, Cys654, and Glu676 each contribute to the Zn(2+) site. The Proton donor role is filled by His705. Cys737 provides a ligand contact to Zn(2+).

The protein belongs to the vitamin-B12 independent methionine synthase family. Requires Zn(2+) as cofactor.

The catalysed reaction is 5-methyltetrahydropteroyltri-L-glutamate + L-homocysteine = tetrahydropteroyltri-L-glutamate + L-methionine. The protein operates within amino-acid biosynthesis; L-methionine biosynthesis via de novo pathway; L-methionine from L-homocysteine (MetE route): step 1/1. In terms of biological role, catalyzes the transfer of a methyl group from 5-methyltetrahydrofolate to homocysteine resulting in methionine formation. This is 5-methyltetrahydropteroyltriglutamate--homocysteine methyltransferase from Bordetella petrii (strain ATCC BAA-461 / DSM 12804 / CCUG 43448).